The following is a 522-amino-acid chain: Protein tweety homolog 3 (522 aa).

The Extracellular segment spans residues 1 to 43 (MAAAISYTPPWWVNLLHRLPHLNLQWESLNGDFRPEDPDYQQS). The chain crosses the membrane as a helical span at residues 44–64 (LMLLACVALSCLALDLLFLLF). Residues 65–87 (YSFWFCCRHRKTEENTNADCCCT) lie on the Cytoplasmic side of the membrane. A helical membrane pass occupies residues 88–108 (VWCVIVATLVCSAGIAVGFYG). Over 109–211 (NGETSDGIHR…VDLFDWYRWL (103 aa)) the chain is Extracellular. Ca(2+)-binding residues include E111 and D114. N-linked (GlcNAc...) asparagine glycans are attached at residues N127 and N145. A helical transmembrane segment spans residues 212–232 (GYLGLLLFHVFICLLVLFGLI). Over 233 to 238 (RNSKGT) the chain is Cytoplasmic. The helical transmembrane segment at 239–259 (LICVCFLGMMALIISWASMGL) threads the bilayer. At 260–386 (ELAVAVGSSD…LTGFCYDGVE (127 aa)) the chain is on the extracellular side. Intrachain disulfides connect C271/C381 and C299/C366. The N-linked (GlcNAc...) asparagine glycan is linked to N351. Residues 387–407 (GLIYLVLFSFVTALMFSSIVC) form a helical membrane-spanning segment. At 408 to 522 (SVPHTWQQRR…TNRPETDPVH (115 aa)) the chain is on the cytoplasmic side. The tract at residues 483-522 (QNPRCENTPLIGRESPPPSYTSSMRAKYLATNRPETDPVH) is disordered.

The protein belongs to the tweety family. In terms of assembly, homotetramer; disulfide-linked. Forms cis-homodimers in the presence of Ca(2+).

Its subcellular location is the cell membrane. The enzyme catalyses chloride(in) = chloride(out). It catalyses the reaction L-glutamate(out) = L-glutamate(in). Its function is as follows. May act as a calcium-independent, swelling-dependent volume-regulated anion channel (VRAC-swell) which plays a pivotal role in the process of regulatory volume decrease (RVD) in the brain through the efflux of anions like chloride and organic osmolytes like glutamate. Probable large-conductance Ca(2+)-activated chloride channel. In Xenopus laevis (African clawed frog), this protein is Protein tweety homolog 3 (ttyh3).